Reading from the N-terminus, the 285-residue chain is 2-dehydro-3-deoxyphosphooctonate aldolase (285 aa).

Belongs to the KdsA family.

It is found in the cytoplasm. It catalyses the reaction D-arabinose 5-phosphate + phosphoenolpyruvate + H2O = 3-deoxy-alpha-D-manno-2-octulosonate-8-phosphate + phosphate. Its pathway is carbohydrate biosynthesis; 3-deoxy-D-manno-octulosonate biosynthesis; 3-deoxy-D-manno-octulosonate from D-ribulose 5-phosphate: step 2/3. It functions in the pathway bacterial outer membrane biogenesis; lipopolysaccharide biosynthesis. This is 2-dehydro-3-deoxyphosphooctonate aldolase from Methylibium petroleiphilum (strain ATCC BAA-1232 / LMG 22953 / PM1).